We begin with the raw amino-acid sequence, 513 residues long: GMP synthase [glutamine-hydrolyzing] (513 aa).

The region spanning 8-198 is the Glutamine amidotransferase type-1 domain; the sequence is MILVLDFGSQ…VFGVCDCDGK (191 aa). The active-site Nucleophile is cysteine 85. Active-site residues include histidine 172 and glutamate 174. Positions 199–388 constitute a GMPS ATP-PPase domain; that stretch reads WSMENFIEIE…LGIPDDIVWR (190 aa). ATP is bound at residue 226 to 232; that stretch reads SGGVDSS.

Homodimer.

The catalysed reaction is XMP + L-glutamine + ATP + H2O = GMP + L-glutamate + AMP + diphosphate + 2 H(+). Its pathway is purine metabolism; GMP biosynthesis; GMP from XMP (L-Gln route): step 1/1. Catalyzes the synthesis of GMP from XMP. The sequence is that of GMP synthase [glutamine-hydrolyzing] from Bacillus pumilus (strain SAFR-032).